Here is a 913-residue protein sequence, read N- to C-terminus: Valine--tRNA ligase (913 aa).

The 'HIGH' region motif lies at 48–58 (PNVTGSLHMGH). The short motif at 541–545 (KMSKS) is the 'KMSKS' region element. Lys544 contacts ATP. The stretch at 839 to 907 (VVDLEALVSK…IEHRLQSLGV (69 aa)) forms a coiled coil.

It belongs to the class-I aminoacyl-tRNA synthetase family. ValS type 1 subfamily. In terms of assembly, monomer.

It is found in the cytoplasm. The catalysed reaction is tRNA(Val) + L-valine + ATP = L-valyl-tRNA(Val) + AMP + diphosphate. In terms of biological role, catalyzes the attachment of valine to tRNA(Val). As ValRS can inadvertently accommodate and process structurally similar amino acids such as threonine, to avoid such errors, it has a 'posttransfer' editing activity that hydrolyzes mischarged Thr-tRNA(Val) in a tRNA-dependent manner. The chain is Valine--tRNA ligase from Thermosynechococcus vestitus (strain NIES-2133 / IAM M-273 / BP-1).